A 421-amino-acid polypeptide reads, in one-letter code: MSNITINKILARQILDSRGYPTIEAEVILSNNTKAKACVPSGASVGKFEAVELRDNDKNYYNGYGVTKAVNIINSEIAPQIIGMNTLNQEKIDNTLIKIDGTDNKSRIGANSTLAVSLAIAKAAASTLNIPLYQYIGGINAKVLPTPLINVINGGMHADNNLDFQEFMIIPNGANKFEDAMRMSAEVFFKLKQILKSKQYNTSVGDEGGFAPNIKTNNEVFEIIIDAIEKSGYKMYKDFSLGLDVAASTFYKDQKYKFADYEFNTQELVEYYKNITSQYPIISLEDPIAEEDTNGWKLITQELGNKIQIVGDDLFVTNCKLIQNGIQNNLANAVLIKPNQIGTLTETFNAIRLAQKNNYNTIISHRSGETEDTTISHIAVAANCGQIKTGSLSRSERLAKYNELLYIEKQLDISAIYYGAL.

Residue glutamine 165 participates in (2R)-2-phosphoglycerate binding. Residue glutamate 207 is the Proton donor of the active site. Residues aspartate 244, glutamate 285, and aspartate 312 each coordinate Mg(2+). The (2R)-2-phosphoglycerate site is built by lysine 337, arginine 366, serine 367, and lysine 388. Residue lysine 337 is the Proton acceptor of the active site.

The protein belongs to the enolase family. Mg(2+) serves as cofactor.

It localises to the cytoplasm. The protein resides in the secreted. It is found in the cell surface. The enzyme catalyses (2R)-2-phosphoglycerate = phosphoenolpyruvate + H2O. It functions in the pathway carbohydrate degradation; glycolysis; pyruvate from D-glyceraldehyde 3-phosphate: step 4/5. Catalyzes the reversible conversion of 2-phosphoglycerate (2-PG) into phosphoenolpyruvate (PEP). It is essential for the degradation of carbohydrates via glycolysis. The chain is Enolase from Ehrlichia canis (strain Jake).